A 232-amino-acid polypeptide reads, in one-letter code: Orotidine 5'-phosphate decarboxylase (232 aa).

Residues aspartate 16, lysine 38, 65–74 (DLKLHDIGNT), threonine 119, arginine 180, glutamine 189, glycine 209, and arginine 210 each bind substrate. Lysine 67 acts as the Proton donor in catalysis.

The protein belongs to the OMP decarboxylase family. Type 1 subfamily. In terms of assembly, homodimer.

It catalyses the reaction orotidine 5'-phosphate + H(+) = UMP + CO2. It participates in pyrimidine metabolism; UMP biosynthesis via de novo pathway; UMP from orotate: step 2/2. In terms of biological role, catalyzes the decarboxylation of orotidine 5'-monophosphate (OMP) to uridine 5'-monophosphate (UMP). This is Orotidine 5'-phosphate decarboxylase from Methylorubrum extorquens (strain PA1) (Methylobacterium extorquens).